The sequence spans 341 residues: D-aspartate oxidase (341 aa).

FAD is bound by residues D36, R37, T43, S44, M50, G307, I311, and S312. The Microbody targeting signal signature appears at 339–341 (SKL).

This sequence belongs to the DAMOX/DASOX family. As to quaternary structure, dimer or tetramer. Interacts with PEX5; the interaction is direct and required for localization of DDO to the peroxisome. The cofactor is FAD. As to expression, expressed in the small intestine (at protein level). Expressed in the ependymal cell layer of the telencephalic ventricles, hippocampus, thalamus, cerebellum, midbrain region, pons, olfactory bulbs, and cortex. Repressed in the testis. In terms of tissue distribution, expressed in the kidney, liver, stomach, pancreas, uterus, lactating breast, involuting mammary gland, brain, heart, lung, and skin. Expressed in kidney, liver, pancreas, and in the mammary gland regardless of lactation status.

The protein localises to the peroxisome matrix. The protein resides in the cytoplasm. It is found in the cytosol. It carries out the reaction D-aspartate + O2 + H2O = oxaloacetate + H2O2 + NH4(+). The catalysed reaction is D-glutamate + O2 + H2O = H2O2 + 2-oxoglutarate + NH4(+). Its activity is regulated as follows. Inhibited by the benzodiazepine olanzapine; chronic systemic administration of the benzodiazepine increases levels of D-aspartate and L-glutamate in the prefrontal cortex. Efficiently inhibited by 5-aminonicotinic acid (5-AN) and 1,4-Dihydropyrido[2,3-b]pyrazine-2,3-dione (DPPD). Inhibited by aminooxyacetic acid, thiolactomycin, anthranilic acid, malonate, meso-tartrate and L-tartrate. Benzoate has no effect on activity. Selectively catalyzes the oxidative deamination of acidic amino acids. Suppresses the level of D-aspartate in the brain, an amino acid that can act as an agonist for glutamate receptors. Protects the organism from the toxicity of D-amino acids. May also function in the intestine. Its function is as follows. Selectively catalyzes the oxidative deamination of acidic amino acids. Functionally, does not exhibit D-aspartate oxidase activity. The sequence is that of D-aspartate oxidase (Ddo) from Mus musculus (Mouse).